The chain runs to 79 residues: Small ribosomal subunit protein bS18 (79 aa).

The protein belongs to the bacterial ribosomal protein bS18 family. Part of the 30S ribosomal subunit. Forms a tight heterodimer with protein bS6.

In terms of biological role, binds as a heterodimer with protein bS6 to the central domain of the 16S rRNA, where it helps stabilize the platform of the 30S subunit. The chain is Small ribosomal subunit protein bS18 from Streptococcus pyogenes serotype M49 (strain NZ131).